The following is a 542-amino-acid chain: Putative inactive cadmium/zinc-transporting ATPase HMA3 (542 aa).

At 1–89 (MAEGEESKKM…VRPYGETSLK (89 aa)) the chain is on the cytoplasmic side. Positions 13–79 (QTSYFDVVGI…ALNQARLEAS (67 aa)) constitute an HMA domain. A helical transmembrane segment spans residues 90–111 (SQWPSPFAIVSGVLLVLSFFKY). Residues 112-114 (FYS) lie on the Extracellular side of the membrane. The helical transmembrane segment at 115 to 134 (PLEWLAIVAVVAGVFPILAK) threads the bilayer. Topologically, residues 135 to 141 (AVASVTR) are cytoplasmic. The chain crosses the membrane as a helical span at residues 142–162 (FRLDINALTLIAVIATLCMQD). A topological domain (extracellular) is located at residue Phe-163. Residues 164-184 (TEAATIVFLFSVADWLESSAA) form a helical membrane-spanning segment. Residues 185 to 310 (HKASIVMSSL…QTKTQRFIDK (126 aa)) are Cytoplasmic-facing. The helical transmembrane segment at 311-333 (CSRYYTPAVVVSAACFAVIPVLL) threads the bilayer. Over 334-341 (KVQDLSHW) the chain is Extracellular. The chain crosses the membrane as a helical span at residues 342 to 359 (FHLALVVLVSGCPCGLIL). The Cytoplasmic segment spans residues 360–542 (STPVATFCAL…VAQALKELKS (183 aa)).

Belongs to the cation transport ATPase (P-type) (TC 3.A.3) family. Type IB subfamily.

It is found in the membrane. This chain is Putative inactive cadmium/zinc-transporting ATPase HMA3 (HMA3), found in Arabidopsis thaliana (Mouse-ear cress).